Consider the following 283-residue polypeptide: Bifunctional protein FolD (283 aa).

NADP(+)-binding positions include 166-168 and isoleucine 232; that span reads GAS.

Belongs to the tetrahydrofolate dehydrogenase/cyclohydrolase family. Homodimer.

It carries out the reaction (6R)-5,10-methylene-5,6,7,8-tetrahydrofolate + NADP(+) = (6R)-5,10-methenyltetrahydrofolate + NADPH. It catalyses the reaction (6R)-5,10-methenyltetrahydrofolate + H2O = (6R)-10-formyltetrahydrofolate + H(+). It participates in one-carbon metabolism; tetrahydrofolate interconversion. Its function is as follows. Catalyzes the oxidation of 5,10-methylenetetrahydrofolate to 5,10-methenyltetrahydrofolate and then the hydrolysis of 5,10-methenyltetrahydrofolate to 10-formyltetrahydrofolate. This is Bifunctional protein FolD from Wigglesworthia glossinidia brevipalpis.